A 341-amino-acid polypeptide reads, in one-letter code: Uroporphyrinogen decarboxylase (341 aa).

Substrate-binding positions include 23 to 27, Asp-73, Tyr-148, Ser-203, and His-318; that span reads RQAGR.

This sequence belongs to the uroporphyrinogen decarboxylase family. As to quaternary structure, homodimer.

The protein localises to the cytoplasm. The catalysed reaction is uroporphyrinogen III + 4 H(+) = coproporphyrinogen III + 4 CO2. Its pathway is porphyrin-containing compound metabolism; protoporphyrin-IX biosynthesis; coproporphyrinogen-III from 5-aminolevulinate: step 4/4. Catalyzes the decarboxylation of four acetate groups of uroporphyrinogen-III to yield coproporphyrinogen-III. This is Uroporphyrinogen decarboxylase from Brucella suis (strain ATCC 23445 / NCTC 10510).